We begin with the raw amino-acid sequence, 370 residues long: Cytochrome b (370 aa).

4 helical membrane passes run 25-45 (FGSM…FLAV), 69-90 (WLMQ…YIHI), 105-125 (WLSG…GYVL), and 170-190 (FFAL…LHIL). Heme b-binding residues include His75 and His89. Heme b-binding residues include His174 and His188. His193 contacts a ubiquinone. 4 helical membrane passes run 218–238 (YKDL…VSFF), 280–300 (LGGA…PFTH), 312–332 (LMQL…WSST), and 339–358 (FTTI…ISKP).

This sequence belongs to the cytochrome b family. In terms of assembly, the cytochrome bc1 complex contains 3 respiratory subunits (MT-CYB, CYC1 and UQCRFS1), 2 core proteins (UQCRC1 and UQCRC2) and probably 6 low-molecular weight proteins. It depends on heme b as a cofactor.

The protein localises to the mitochondrion inner membrane. Functionally, component of the ubiquinol-cytochrome c reductase complex (complex III or cytochrome b-c1 complex) that is part of the mitochondrial respiratory chain. The b-c1 complex mediates electron transfer from ubiquinol to cytochrome c. Contributes to the generation of a proton gradient across the mitochondrial membrane that is then used for ATP synthesis. The sequence is that of Cytochrome b (MT-CYB) from Chilabothrus subflavus (Jamaican yellow boa).